A 116-amino-acid polypeptide reads, in one-letter code: Nucleoid-associated protein EUBELI_02017 (116 aa).

A compositionally biased stretch (gly residues) spans 1–12 (MAKRGGFPGGMP). The segment at 1 to 42 (MAKRGGFPGGMPGNMNNLMKQAQRMQRQMEEQQAELENKEFS) is disordered. Positions 13 to 26 (GNMNNLMKQAQRMQ) are enriched in low complexity.

Belongs to the YbaB/EbfC family. Homodimer.

It localises to the cytoplasm. The protein localises to the nucleoid. In terms of biological role, binds to DNA and alters its conformation. May be involved in regulation of gene expression, nucleoid organization and DNA protection. This is Nucleoid-associated protein EUBELI_02017 from Lachnospira eligens (strain ATCC 27750 / DSM 3376 / VPI C15-48 / C15-B4) (Eubacterium eligens).